The chain runs to 188 residues: MNPQVSNIIIMLVMMQLSRRIDMEDPTIIMYIRILYCSSIGISWIIYQMARKRIVAKNDMTTMKYVEPGNAMSGEGEKLQVTTVRDYDLKEIDSAIKSIYTGMAMMGFMHLYLKYTNPLFMQSISPVKSALEHNEVKIHLFGKPATGDLKRPFKAPSLFGGMGQTGPKTDKKSIEEAERAGNAGVKAE.

A helical membrane pass occupies residues 27–47 (TIIMYIRILYCSSIGISWIIY). S157 is modified (phosphoserine). The interval 157–188 (SLFGGMGQTGPKTDKKSIEEAERAGNAGVKAE) is disordered. A compositionally biased stretch (basic and acidic residues) spans 168–179 (KTDKKSIEEAER).

Belongs to the PHO88 family. In terms of assembly, interacts with ENV10/SND2. ENV10/SND2 and PHO88/SND3 form a complex with the translocon in the endoplasmic reticulum membrane.

The protein localises to the endoplasmic reticulum membrane. It localises to the mitochondrion. In terms of biological role, functions in the SND pathway, a SRP (signal recognition particle) and GET (guided entry of tail-anchored proteins) independent pathway for targeting a broad range of substrate proteins to the endoplasmic reticulum. SND functions in parallel to GET in targeting proteins with downstream hydrophobic motifs. Involved in inorganic phosphate uptake. Also involved in telomere length regulation and maintenance. The polypeptide is SRP-independent targeting protein 3 (Saccharomyces cerevisiae (strain ATCC 204508 / S288c) (Baker's yeast)).